A 293-amino-acid polypeptide reads, in one-letter code: Acetylglutamate kinase (293 aa).

Residues 68 to 69 (GG), Arg-90, and Asn-189 each bind substrate.

Belongs to the acetylglutamate kinase family. ArgB subfamily.

It is found in the cytoplasm. The catalysed reaction is N-acetyl-L-glutamate + ATP = N-acetyl-L-glutamyl 5-phosphate + ADP. It participates in amino-acid biosynthesis; L-arginine biosynthesis; N(2)-acetyl-L-ornithine from L-glutamate: step 2/4. In terms of biological role, catalyzes the ATP-dependent phosphorylation of N-acetyl-L-glutamate. The sequence is that of Acetylglutamate kinase from Mycobacterium marinum (strain ATCC BAA-535 / M).